We begin with the raw amino-acid sequence, 203 residues long: Proteasome subunit beta 2 (203 aa).

The propeptide at 1–10 is removed in mature form; by autocatalysis; sequence MNLQNKILKG. Catalysis depends on Thr11, which acts as the Nucleophile.

This sequence belongs to the peptidase T1B family. The 20S proteasome core is composed of 14 alpha and 14 beta subunits that assemble into four stacked heptameric rings, resulting in a barrel-shaped structure. The two inner rings, each composed of seven catalytic beta subunits, are sandwiched by two outer rings, each composed of seven alpha subunits. The catalytic chamber with the active sites is on the inside of the barrel. Has a gated structure, the ends of the cylinder being occluded by the N-termini of the alpha-subunits. Is capped at one or both ends by the proteasome regulatory ATPase, PAN.

The protein localises to the cytoplasm. The catalysed reaction is Cleavage of peptide bonds with very broad specificity.. The formation of the proteasomal ATPase PAN-20S proteasome complex, via the docking of the C-termini of PAN into the intersubunit pockets in the alpha-rings, triggers opening of the gate for substrate entry. Interconversion between the open-gate and close-gate conformations leads to a dynamic regulation of the 20S proteasome proteolysis activity. Functionally, component of the proteasome core, a large protease complex with broad specificity involved in protein degradation. This Sulfolobus acidocaldarius (strain ATCC 33909 / DSM 639 / JCM 8929 / NBRC 15157 / NCIMB 11770) protein is Proteasome subunit beta 2.